The primary structure comprises 237 residues: Ribosomal RNA small subunit methyltransferase G (237 aa).

S-adenosyl-L-methionine-binding positions include Gly-78, Phe-83, 129-130, and Arg-148; that span reads AE.

The protein belongs to the methyltransferase superfamily. RNA methyltransferase RsmG family.

It is found in the cytoplasm. Specifically methylates the N7 position of a guanine in 16S rRNA. This chain is Ribosomal RNA small subunit methyltransferase G, found in Clostridium kluyveri (strain ATCC 8527 / DSM 555 / NBRC 12016 / NCIMB 10680 / K1).